Here is a 76-residue protein sequence, read N- to C-terminus: MPQSSRYSDEHVEQLLSEMVNVLEKHHAPTDLALMVLGNMVTNLINTSIAPAQRQILARSFAEALQASIKKADKAH.

This sequence belongs to the UPF0352 family.

The protein is UPF0352 protein ECA2748 of Pectobacterium atrosepticum (strain SCRI 1043 / ATCC BAA-672) (Erwinia carotovora subsp. atroseptica).